The sequence spans 325 residues: RNA ligase 1 (325 aa).

Requires Mg(2+) as cofactor. Mn(2+) serves as cofactor. AMPylates itself (auto-AMPylation).

The catalysed reaction is ATP + (ribonucleotide)n-3'-hydroxyl + 5'-phospho-(ribonucleotide)m = (ribonucleotide)n+m + AMP + diphosphate.. Functions as an RNA ligase, in vitro. The ligation reaction entails three nucleotidyl transfer steps. In the first step, the RNA ligase reacts with ATP in the absence of nucleic acid to form a covalent ligase-AMP intermediate and release pyrophosphate. In step 2, the ligase-AMP binds to the nucleic acid and transfers the adenylate to the 5'-PO4 terminus to form an adenylylated intermediate. In step 3, the RNA ligase directs the attack of the 3'-OH on the 5'-phosphoanhydride linkage, resulting in a repaired 3'-5' phosphodiester and release of AMP. Exhibits selectivity for single-stranded RNA substrates and may not have nick-sealing activity on double-stranded DNA-RNA hybrids. May play a role in maintaining RNA integrity under stress conditions, for example in response to reactive oxygen species (ROS). The protein is RNA ligase 1 of Danio rerio (Zebrafish).